We begin with the raw amino-acid sequence, 101 residues long: Acylphosphatase (101 aa).

Residues 13–101 (RARILVRGVV…GEFRGFEIRY (89 aa)) form the Acylphosphatase-like domain. Catalysis depends on residues arginine 28 and asparagine 46.

This sequence belongs to the acylphosphatase family.

It carries out the reaction an acyl phosphate + H2O = a carboxylate + phosphate + H(+). This is Acylphosphatase (acyP) from Aeropyrum pernix (strain ATCC 700893 / DSM 11879 / JCM 9820 / NBRC 100138 / K1).